The sequence spans 434 residues: 3-phosphoshikimate 1-carboxyvinyltransferase (434 aa).

Positions 15, 16, and 20 each coordinate 3-phosphoshikimate. Residue K15 coordinates phosphoenolpyruvate. Phosphoenolpyruvate-binding residues include G96 and R124. 5 residues coordinate 3-phosphoshikimate: S169, Q171, S195, D319, and K346. Q171 serves as a coordination point for phosphoenolpyruvate. D319 serves as the catalytic Proton acceptor. R350 and R394 together coordinate phosphoenolpyruvate.

This sequence belongs to the EPSP synthase family. Monomer.

Its subcellular location is the cytoplasm. It carries out the reaction 3-phosphoshikimate + phosphoenolpyruvate = 5-O-(1-carboxyvinyl)-3-phosphoshikimate + phosphate. The protein operates within metabolic intermediate biosynthesis; chorismate biosynthesis; chorismate from D-erythrose 4-phosphate and phosphoenolpyruvate: step 6/7. Catalyzes the transfer of the enolpyruvyl moiety of phosphoenolpyruvate (PEP) to the 5-hydroxyl of shikimate-3-phosphate (S3P) to produce enolpyruvyl shikimate-3-phosphate and inorganic phosphate. The polypeptide is 3-phosphoshikimate 1-carboxyvinyltransferase (Chlorobaculum tepidum (strain ATCC 49652 / DSM 12025 / NBRC 103806 / TLS) (Chlorobium tepidum)).